Here is a 195-residue protein sequence, read N- to C-terminus: Heat shock protein beta-8 (195 aa).

Position 56 is a phosphoserine (S56). Phosphothreonine is present on T62. 2 positions are modified to asymmetric dimethylarginine: R70 and R77. Positions 73 to 184 constitute a sHSP domain; the sequence is TATARFGVPA…TFGESSFNNE (112 aa). Positions 175 to 195 are disordered; that stretch reads TFGESSFNNELPQDSQEVTCT. Residues 176–195 are compositionally biased toward polar residues; sequence FGESSFNNELPQDSQEVTCT.

It belongs to the small heat shock protein (HSP20) family. As to quaternary structure, monomer. Forms a ternary complex with BAG3 and HSPA1A. Component of the chaperone-assisted selective autophagy (CASA) complex consisting of BAG3, HSPA8/HSC70, HSPB8 and STUB1/CHIP. Interacts with HSPB1. Interacts with DNAJB6. Interacts with BAG3. Phosphorylated.

It localises to the cytoplasm. It is found in the nucleus. Functionally, involved in the chaperone-assisted selective autophagy (CASA), a crucial process for protein quality control, particularly in mechanical strained cells and tissues such as muscle. Displays temperature-dependent chaperone activity. This chain is Heat shock protein beta-8 (HSPB8), found in Macaca mulatta (Rhesus macaque).